A 504-amino-acid chain; its full sequence is Maturase K (504 aa).

It belongs to the intron maturase 2 family. MatK subfamily.

Its subcellular location is the plastid. The protein resides in the chloroplast. In terms of biological role, usually encoded in the trnK tRNA gene intron. Probably assists in splicing its own and other chloroplast group II introns. The chain is Maturase K from Erythrina crista-galli (Cockspur coral tree).